A 371-amino-acid polypeptide reads, in one-letter code: 4-hydroxyprotoasukamycin monooxygenase (371 aa).

This sequence belongs to the bacterial luciferase oxidoreductase family. FMN is required as a cofactor.

The enzyme catalyses 4-hydroxyprotoasukamycin + NADH + O2 + H(+) = asukamycin + NAD(+) + H2O. It functions in the pathway antibiotic biosynthesis. Involved in the biosynthesis of the antibiotic asukamycin. Catalyzes the epoxidation of 4-hydroxyprotoasukamycin to the final product, asukamycin. Can also convert some 4-hydroxyprotoasukamycin derivatives to their asukamycin derivatives, but cannot use protoasukamycin as substrate. Can also use NADPH, but catalytic efficiency is 20-fold higher with NADH. The chain is 4-hydroxyprotoasukamycin monooxygenase from Streptomyces nodosus subsp. asukaensis.